A 197-amino-acid polypeptide reads, in one-letter code: Nucleoid occlusion factor SlmA (197 aa).

Residues 7–67 (INRREHILQC…GLIEFIEESL (61 aa)) form the HTH tetR-type domain. Positions 30–49 (TTAKLASEVGVSEAALYRHF) form a DNA-binding region, H-T-H motif.

This sequence belongs to the nucleoid occlusion factor SlmA family. Homodimer. Interacts with FtsZ.

It localises to the cytoplasm. The protein localises to the nucleoid. In terms of biological role, required for nucleoid occlusion (NO) phenomenon, which prevents Z-ring formation and cell division over the nucleoid. Acts as a DNA-associated cell division inhibitor that binds simultaneously chromosomal DNA and FtsZ, and disrupts the assembly of FtsZ polymers. SlmA-DNA-binding sequences (SBS) are dispersed on non-Ter regions of the chromosome, preventing FtsZ polymerization at these regions. The polypeptide is Nucleoid occlusion factor SlmA (Shewanella oneidensis (strain ATCC 700550 / JCM 31522 / CIP 106686 / LMG 19005 / NCIMB 14063 / MR-1)).